A 602-amino-acid chain; its full sequence is Elongation factor 4 (602 aa).

Residues 7–189 (SRLRNFCIIA…AVVERVPPPK (183 aa)) enclose the tr-type G domain. GTP-binding positions include 19 to 24 (DHGKST) and 136 to 139 (NKVD).

It belongs to the TRAFAC class translation factor GTPase superfamily. Classic translation factor GTPase family. LepA subfamily.

It is found in the cell inner membrane. It carries out the reaction GTP + H2O = GDP + phosphate + H(+). Functionally, required for accurate and efficient protein synthesis under certain stress conditions. May act as a fidelity factor of the translation reaction, by catalyzing a one-codon backward translocation of tRNAs on improperly translocated ribosomes. Back-translocation proceeds from a post-translocation (POST) complex to a pre-translocation (PRE) complex, thus giving elongation factor G a second chance to translocate the tRNAs correctly. Binds to ribosomes in a GTP-dependent manner. The chain is Elongation factor 4 from Prochlorococcus marinus (strain MIT 9211).